A 366-amino-acid polypeptide reads, in one-letter code: Neutral protease 2 homolog BDBG_02110 (366 aa).

Positions 1–19 (MQLSSVLLTAAGLLAPVYS) are cleaved as a signal peptide. A propeptide spanning residues 23 to 184 (ISIGRRSEGL…RAKIHDHLAQ (162 aa)) is cleaved from the precursor. N-linked (GlcNAc...) asparagine glycans are attached at residues Asn-123 and Asn-192. A disulfide bond links Cys-272 and Cys-290. His-314 is a binding site for Zn(2+). Glu-315 is an active-site residue. His-318 lines the Zn(2+) pocket.

Belongs to the peptidase M35 family. It depends on Zn(2+) as a cofactor.

It is found in the secreted. It carries out the reaction Preferential cleavage of bonds with hydrophobic residues in P1'. Also 3-Asn-|-Gln-4 and 8-Gly-|-Ser-9 bonds in insulin B chain.. Secreted metalloproteinase that allows assimilation of proteinaceous substrates. Shows high activities on basic nuclear substrates such as histone and protamine. The protein is Neutral protease 2 homolog BDBG_02110 of Blastomyces gilchristii (strain SLH14081) (Blastomyces dermatitidis).